The chain runs to 478 residues: MSSTAPRTLYQKIWDAHVVERRDDGTCLIYIDRHLVHEVTSPQAFEALRAAGRKVRRPDLTLAVPDHNLPTTARRTADGRRVPIADPESAQQLEALERNAPEFGIRYIGDADDEQGIVHVVGPEQGFSLPGATIVCGDSHTACHGGLGALAFGIGTSEVEHVLATQTLLLKQSKTMEVRVEGELTPGVTAKDVVLHITGVLGAAGGTGSVIEYTGSVIRDLSIEGRLTISNMAIEHGARAGLCAPDEKTFAYLKGRPYAPRGEDWDKAVAWWKSLATDPGATYDKVVVIDAKDIAPSVTWGTSPEDVLPISGLVPAPESFADPSKQEAARASLEYMGLVPGQRMEDVEVQNIFIGSCTNSRIEDMRAAAAILKGRKKADNVKWAIVVPGSGLVKKQAEEEGLDRVFIEAGFEWREPGCSACLGMNPDKVPAGERCASTSNRNFVGRQGPGARTHLVSPAMAAAAAVTGRLTDVRKLMA.

C357, C418, and C421 together coordinate [4Fe-4S] cluster.

Belongs to the aconitase/IPM isomerase family. LeuC type 1 subfamily. As to quaternary structure, heterodimer of LeuC and LeuD. Requires [4Fe-4S] cluster as cofactor.

It carries out the reaction (2R,3S)-3-isopropylmalate = (2S)-2-isopropylmalate. Its pathway is amino-acid biosynthesis; L-leucine biosynthesis; L-leucine from 3-methyl-2-oxobutanoate: step 2/4. Functionally, catalyzes the isomerization between 2-isopropylmalate and 3-isopropylmalate, via the formation of 2-isopropylmaleate. The chain is 3-isopropylmalate dehydratase large subunit from Novosphingobium aromaticivorans (strain ATCC 700278 / DSM 12444 / CCUG 56034 / CIP 105152 / NBRC 16084 / F199).